The chain runs to 122 residues: Large ribosomal subunit protein uL14 (122 aa).

It belongs to the universal ribosomal protein uL14 family. As to quaternary structure, part of the 50S ribosomal subunit. Forms a cluster with proteins L3 and L19. In the 70S ribosome, L14 and L19 interact and together make contacts with the 16S rRNA in bridges B5 and B8.

Binds to 23S rRNA. Forms part of two intersubunit bridges in the 70S ribosome. This Polynucleobacter asymbioticus (strain DSM 18221 / CIP 109841 / QLW-P1DMWA-1) (Polynucleobacter necessarius subsp. asymbioticus) protein is Large ribosomal subunit protein uL14.